We begin with the raw amino-acid sequence, 92 residues long: uncharacterized protein (92 aa).

This is an uncharacterized protein from Enterobacteria phage T4 (Bacteriophage T4).